Reading from the N-terminus, the 417-residue chain is Phosphoglycerate kinase 2 (417 aa).

Serine 2 bears the N-acetylserine mark. Residues serine 2 and serine 4 each carry the phosphoserine modification. Lysine 11 is subject to N6-acetyllysine. Residues valine 23, aspartate 24, phenylalanine 25, asparagine 26, glutamine 38, arginine 39, serine 62, histidine 63, glycine 65, and arginine 66 each coordinate (2R)-3-phosphoglycerate. Residues lysine 75, lysine 86, and lysine 97 each carry the N6-acetyllysine modification. (2R)-3-phosphoglycerate is bound by residues leucine 122 and arginine 123. N6-acetyllysine is present on residues lysine 131 and lysine 146. Positions 170 and 171 each coordinate (2R)-3-phosphoglycerate. A Phosphotyrosine modification is found at tyrosine 196. Residue lysine 199 is modified to N6-acetyllysine. Glycine 214 contributes to the ADP binding site. A CDP-binding site is contributed by glycine 214. 2 residues coordinate AMP: alanine 215 and lysine 216. Alanine 215 contributes to the ATP binding site. Alanine 215 is a binding site for Mg(2+). Mg(2+)-binding residues include alanine 218 and aspartate 219. CDP is bound at residue aspartate 219. Lysine 220 serves as a coordination point for AMP. Residue lysine 220 coordinates ATP. Residue glycine 238 participates in ADP binding. Glycine 238 provides a ligand contact to CDP. Glycine 239 contributes to the AMP binding site. Glycine 239 contacts ATP. N6-acetyllysine is present on residues lysine 267 and lysine 291. Alanine 313 serves as a coordination point for AMP. Position 313 (alanine 313) interacts with ATP. The CDP site is built by glycine 338 and phenylalanine 343. Residue phenylalanine 343 coordinates ADP. Residue glutamate 344 participates in AMP binding. Glutamate 344, aspartate 375, and threonine 376 together coordinate ATP. Aspartate 375 contributes to the Mg(2+) binding site.

This sequence belongs to the phosphoglycerate kinase family. As to quaternary structure, monomer. It depends on Mg(2+) as a cofactor. As to expression, testis specific.

It localises to the cytoplasm. The enzyme catalyses (2R)-3-phosphoglycerate + ATP = (2R)-3-phospho-glyceroyl phosphate + ADP. The protein operates within carbohydrate degradation; glycolysis; pyruvate from D-glyceraldehyde 3-phosphate: step 2/5. In terms of biological role, essential for sperm motility and male fertility but is not required for the completion of spermatogenesis. This is Phosphoglycerate kinase 2 from Sus scrofa (Pig).